Here is a 283-residue protein sequence, read N- to C-terminus: Coiled-coil domain-containing protein 107 (283 aa).

The signal sequence occupies residues 1-24 (MAGAVSLLGVVGLLLVSALSGVLG). Positions 30–62 (DLRAHPGNAAHPGSGATEPRRRPPLKDQRERTR) are disordered. The span at 47–62 (EPRRRPPLKDQRERTR) shows a compositional bias: basic and acidic residues. A helical membrane pass occupies residues 65–85 (SLPLGALYTAAVAAFVLYKCL). Residues 104–134 (LQSEQQLAQLTQQLAQTEQHLNNLMAQLDPL) are a coiled coil. 2 disordered regions span residues 164–207 (KPDK…SRPL) and 258–283 (AKGP…SLFS). Residues 176–187 (EGSGGESAGGGD) show a composition bias toward gly residues.

It is found in the membrane. This Homo sapiens (Human) protein is Coiled-coil domain-containing protein 107 (CCDC107).